Here is a 156-residue protein sequence, read N- to C-terminus: Melatonin receptor type 1A (156 aa).

A run of 3 helical transmembrane segments spans residues 19–39 (LCYV…NLQT), 62–82 (TIAL…FCYL), and 115–135 (FVVF…GLIV).

It belongs to the G-protein coupled receptor 1 family. As to expression, at least in the brain, more precisely in the pars tuberalis and the suprachiasmatic nucleus.

It localises to the cell membrane. In terms of biological role, high affinity receptor for melatonin. Likely to mediate the reproductive and circadian actions of melatonin. The activity of this receptor is mediated by pertussis toxin sensitive G proteins that inhibit adenylate cyclase activity. Possibly involved in sleep induction, by melatonin activation of the potassium channel KCNMA1/BK and the dissociation of G-beta and G-gamma subunits, thereby decreasing synaptic transmission. This Rattus norvegicus (Rat) protein is Melatonin receptor type 1A (Mtnr1a).